The primary structure comprises 862 residues: Chaperone protein ClpB 1 (862 aa).

The Clp R domain occupies 5-147; sequence AEQFTEQAWA…KEAITAVRGN (143 aa). Repeat regions lie at residues 8 to 72 and 84 to 147; these read FTEQ…LQRL and LGRS…VRGN. An NBD1 region spans residues 160–341; sequence ESLAKYGRDL…RRFQQVLVDQ (182 aa). 207 to 214 contributes to the ATP binding site; the sequence is GEPGVGKT. Positions 342-550 are linker; sequence PTVPDTISIL…IAEVIAKWTG (209 aa). Residues 392–526 adopt a coiled-coil conformation; sequence IDLVDESAAR…QEDLLEDEDG (135 aa). The NBD2 stretch occupies residues 560 to 771; the sequence is EMEKLLQLED…RLDDQIIFRS (212 aa). Residue 610–617 coordinates ATP; it reads GPTGVGKT. The C-terminal stretch occupies residues 772 to 862; the sequence is LEKEELRRIV…DAGDDKLSIS (91 aa).

This sequence belongs to the ClpA/ClpB family. Homohexamer. The oligomerization is ATP-dependent.

It is found in the cytoplasm. In terms of biological role, part of a stress-induced multi-chaperone system, it is involved in the recovery of the cell from heat-induced damage, in cooperation with DnaK, DnaJ and GrpE. Acts before DnaK, in the processing of protein aggregates. Protein binding stimulates the ATPase activity; ATP hydrolysis unfolds the denatured protein aggregates, which probably helps expose new hydrophobic binding sites on the surface of ClpB-bound aggregates, contributing to the solubilization and refolding of denatured protein aggregates by DnaK. This Parasynechococcus marenigrum (strain WH8102) protein is Chaperone protein ClpB 1 (clpB1).